The sequence spans 462 residues: Glycine--tRNA ligase (462 aa).

2 residues coordinate substrate: Arg-100 and Glu-174. ATP-binding positions include 206–208 (RNE), 216–221 (FRTREF), 290–291 (EL), and 334–337 (GADR). 221–225 (FEQME) provides a ligand contact to substrate. 330 to 334 (EPSLG) is a substrate binding site.

It belongs to the class-II aminoacyl-tRNA synthetase family. Homodimer.

It is found in the cytoplasm. It catalyses the reaction tRNA(Gly) + glycine + ATP = glycyl-tRNA(Gly) + AMP + diphosphate. Functionally, catalyzes the attachment of glycine to tRNA(Gly). The sequence is that of Glycine--tRNA ligase from Acetivibrio thermocellus (strain ATCC 27405 / DSM 1237 / JCM 9322 / NBRC 103400 / NCIMB 10682 / NRRL B-4536 / VPI 7372) (Clostridium thermocellum).